The sequence spans 288 residues: Acetyl-coenzyme A carboxylase carboxyl transferase subunit beta (288 aa).

The region spanning 32 to 288 (LLLICPKCKK…ILMLHNVEAR (257 aa)) is the CoA carboxyltransferase N-terminal domain. Positions 36, 39, 55, and 58 each coordinate Zn(2+). The C4-type zinc finger occupies 36–58 (CPKCKKTLLKSELADNLDVCREC).

The protein belongs to the AccD/PCCB family. Acetyl-CoA carboxylase is a heterohexamer composed of biotin carboxyl carrier protein (AccB), biotin carboxylase (AccC) and two subunits each of ACCase subunit alpha (AccA) and ACCase subunit beta (AccD). Zn(2+) is required as a cofactor.

The protein localises to the cytoplasm. The enzyme catalyses N(6)-carboxybiotinyl-L-lysyl-[protein] + acetyl-CoA = N(6)-biotinyl-L-lysyl-[protein] + malonyl-CoA. It participates in lipid metabolism; malonyl-CoA biosynthesis; malonyl-CoA from acetyl-CoA: step 1/1. Functionally, component of the acetyl coenzyme A carboxylase (ACC) complex. Biotin carboxylase (BC) catalyzes the carboxylation of biotin on its carrier protein (BCCP) and then the CO(2) group is transferred by the transcarboxylase to acetyl-CoA to form malonyl-CoA. This is Acetyl-coenzyme A carboxylase carboxyl transferase subunit beta from Ruminiclostridium cellulolyticum (strain ATCC 35319 / DSM 5812 / JCM 6584 / H10) (Clostridium cellulolyticum).